A 333-amino-acid chain; its full sequence is Probable tRNA-dihydrouridine synthase 1 (333 aa).

Residues 17–19 (PMA) and Q71 each bind FMN. C102 serves as the catalytic Proton donor. FMN contacts are provided by residues K141, 202 to 204 (NGD), and 226 to 227 (GR).

Belongs to the Dus family. It depends on FMN as a cofactor.

The enzyme catalyses a 5,6-dihydrouridine in tRNA + NAD(+) = a uridine in tRNA + NADH + H(+). The catalysed reaction is a 5,6-dihydrouridine in tRNA + NADP(+) = a uridine in tRNA + NADPH + H(+). In terms of biological role, catalyzes the synthesis of 5,6-dihydrouridine (D), a modified base found in the D-loop of most tRNAs, via the reduction of the C5-C6 double bond in target uridines. The polypeptide is Probable tRNA-dihydrouridine synthase 1 (dus1) (Bacillus subtilis (strain 168)).